The following is a 177-amino-acid chain: ATP synthase subunit delta (177 aa).

Belongs to the ATPase delta chain family. As to quaternary structure, F-type ATPases have 2 components, F(1) - the catalytic core - and F(0) - the membrane proton channel. F(1) has five subunits: alpha(3), beta(3), gamma(1), delta(1), epsilon(1). F(0) has three main subunits: a(1), b(2) and c(10-14). The alpha and beta chains form an alternating ring which encloses part of the gamma chain. F(1) is attached to F(0) by a central stalk formed by the gamma and epsilon chains, while a peripheral stalk is formed by the delta and b chains.

The protein resides in the cell inner membrane. F(1)F(0) ATP synthase produces ATP from ADP in the presence of a proton or sodium gradient. F-type ATPases consist of two structural domains, F(1) containing the extramembraneous catalytic core and F(0) containing the membrane proton channel, linked together by a central stalk and a peripheral stalk. During catalysis, ATP synthesis in the catalytic domain of F(1) is coupled via a rotary mechanism of the central stalk subunits to proton translocation. In terms of biological role, this protein is part of the stalk that links CF(0) to CF(1). It either transmits conformational changes from CF(0) to CF(1) or is implicated in proton conduction. This chain is ATP synthase subunit delta, found in Enterobacter sp. (strain 638).